We begin with the raw amino-acid sequence, 550 residues long: Natural resistance-associated macrophage protein 1 (550 aa).

The disordered stretch occupies residues Met1–Ile45. Over Met1–Leu58 the chain is Cytoplasmic. Positions Ser11–Ser23 are enriched in low complexity. A helical membrane pass occupies residues Trp59 to Gly76. Residues Asn77–Gly85 lie on the Extracellular side of the membrane. Residues Ala86–Leu105 form a helical membrane-spanning segment. Residues Cys106–Glu142 lie on the Cytoplasmic side of the membrane. A helical transmembrane segment spans residues Leu143–Leu163. Over Ser164–Arg167 the chain is Extracellular. The chain crosses the membrane as a helical span at residues Ile168–Leu187. The Cytoplasmic portion of the chain corresponds to Asp188–Glu196. Residues Ala197–Ala217 form a helical membrane-spanning segment. The Extracellular segment spans residues Arg218–Glu240. A helical membrane pass occupies residues Leu241 to Leu259. The Cytoplasmic segment spans residues His260–Glu287. Residues Ala288 to Gly307 form a helical membrane-spanning segment. The Extracellular portion of the chain corresponds to Gln308–Gly349. Asn324 and Asn338 each carry an N-linked (GlcNAc...) asparagine glycan. Residues Val350–Leu369 form a helical membrane-spanning segment. Topologically, residues Ala370–Arg400 are cytoplasmic. Residues Val401 to Phe418 traverse the membrane as a helical segment. Topologically, residues Arg419 to Asp429 are extracellular. Residues Leu430 to Thr450 form a helical membrane-spanning segment. Over Ser451–Lys466 the chain is Cytoplasmic. Residues Val467–Leu488 form a helical membrane-spanning segment. The Extracellular segment spans residues Pro489 to Tyr496. The helical transmembrane segment at Phe497–Trp516 threads the bilayer. The Cytoplasmic segment spans residues Thr517–Gly550.

This sequence belongs to the NRAMP family. As to expression, macrophages; peripheral blood leukocytes, lung, spleen and liver.

It localises to the late endosome membrane. The protein resides in the lysosome membrane. It catalyses the reaction Zn(2+)(in) + H(+)(out) = Zn(2+)(out) + H(+)(in). The enzyme catalyses Fe(2+)(in) + H(+)(out) = Fe(2+)(out) + H(+)(in). The catalysed reaction is Mn(2+)(in) + H(+)(out) = Mn(2+)(out) + H(+)(in). Macrophage-specific antiporter that fluxes metal ions in either direction against a proton gradient. Localized to late endosomal lysosomal membranes, delivers bivalent cations from the cytosol into these acidic compartments where they may directly affect antimicrobial activity. Involved in iron metabolism and host natural resistance to infection with intracellular parasites. Pathogen resistance involves sequestration of Fe(2+) and Mn(2+), cofactors of both prokaryotic and eukaryotic catalases and superoxide dismutases, not only to protect the macrophage against its own generation of reactive oxygen species, but to deny the cations to the pathogen for synthesis of its protective enzymes. This chain is Natural resistance-associated macrophage protein 1, found in Homo sapiens (Human).